A 118-amino-acid chain; its full sequence is Small ribosomal subunit protein uS13 (118 aa).

Residues 94–118 (SLPLRGQRTKTNARTRKGPRKPIRK) form a disordered region.

The protein belongs to the universal ribosomal protein uS13 family. In terms of assembly, part of the 30S ribosomal subunit. Forms a loose heterodimer with protein S19. Forms two bridges to the 50S subunit in the 70S ribosome.

Located at the top of the head of the 30S subunit, it contacts several helices of the 16S rRNA. In the 70S ribosome it contacts the 23S rRNA (bridge B1a) and protein L5 of the 50S subunit (bridge B1b), connecting the 2 subunits; these bridges are implicated in subunit movement. Contacts the tRNAs in the A and P-sites. This Shewanella sediminis (strain HAW-EB3) protein is Small ribosomal subunit protein uS13.